We begin with the raw amino-acid sequence, 300 residues long: ETS homologous factor (300 aa).

The PNT domain maps to 29–115 (STCNVSSGFF…SNLQHLKWNG (87 aa)). Residues 183 to 202 (ESPDMKKEQDPPAKCHTKKH) are disordered. A compositionally biased stretch (basic and acidic residues) spans 185 to 195 (PDMKKEQDPPA). The ETS DNA-binding region spans 207–289 (THLWEFIRDI…DGRRLVYKFG (83 aa)).

This sequence belongs to the ETS family. As to expression, expressed exclusively in tissues with a high content of epithelial cells. Highly expressed in salivary gland, mammary gland, prostate, and lung. Weakly expressed in kidney and colon. Not detected in heart, brain, placenta, liver, skeletal muscle, spleen, thymus, testis, ovary, small intestine or peripheral blood leukocytes.

The protein localises to the nucleus. Transcriptional activator that may play a role in regulating epithelial cell differentiation and proliferation. May act as a repressor for a specific subset of ETS/AP-1-responsive genes and as a modulator of the nuclear response to mitogen-activated protein kinase signaling cascades. Binds to DNA sequences containing the consensus nucleotide core sequence GGAA. Involved in regulation of TNFRSF10B/DR5 expression through Ets-binding sequences on the TNFRSF10B/DR5 promoter. May contribute to development and carcinogenesis by acting as a tumor suppressor gene or anti-oncogene. This is ETS homologous factor from Homo sapiens (Human).